The sequence spans 454 residues: Histidine--tRNA ligase (454 aa).

Belongs to the class-II aminoacyl-tRNA synthetase family. As to quaternary structure, homodimer.

It is found in the cytoplasm. It carries out the reaction tRNA(His) + L-histidine + ATP = L-histidyl-tRNA(His) + AMP + diphosphate + H(+). This chain is Histidine--tRNA ligase, found in Bacteroides fragilis (strain YCH46).